Reading from the N-terminus, the 271-residue chain is Probable CAAX prenyl protease 2 (271 aa).

2 helical membrane passes run 3–23 and 42–62; these read VYLI…TFPV and CISV…IIGP. Residues Glu-126 and His-160 each act as proton donor/acceptor in the active site. The next 2 helical transmembrane spans lie at 174 to 194 and 236 to 256; these read AYIA…VFGW and IYYT…GITD.

This sequence belongs to the peptidase U48 family.

It is found in the endoplasmic reticulum membrane. The enzyme catalyses Hydrolyzes the peptide bond -P2-(S-farnesyl or geranylgeranyl)C-P1'-P2'-P3'-COOH where P1' and P2' are amino acids with aliphatic sidechains and P3' is any C-terminal residue.. In terms of biological role, protease involved in the processing of a variety of prenylated proteins containing the C-terminal CAAX motif, where C is a cysteine modified with an isoprenoid lipid, A is an aliphatic amino acid and X is any C-terminal amino acid. Proteolytically removes the C-terminal three residues of farnesylated proteins, leaving the prenylated cysteine as the new C-terminus. The polypeptide is Probable CAAX prenyl protease 2 (Schizosaccharomyces pombe (strain 972 / ATCC 24843) (Fission yeast)).